Reading from the N-terminus, the 248-residue chain is Pyridoxine 5'-phosphate synthase (248 aa).

N10 is a binding site for 3-amino-2-oxopropyl phosphate. D12–H13 contributes to the 1-deoxy-D-xylulose 5-phosphate binding site. Residue R21 coordinates 3-amino-2-oxopropyl phosphate. The Proton acceptor role is filled by H46. 1-deoxy-D-xylulose 5-phosphate-binding residues include R48 and H53. Residue E73 is the Proton acceptor of the active site. 1-deoxy-D-xylulose 5-phosphate is bound at residue T103. The Proton donor role is filled by H194. 3-amino-2-oxopropyl phosphate contacts are provided by residues G195 and G216–H217.

It belongs to the PNP synthase family. In terms of assembly, homooctamer; tetramer of dimers.

The protein resides in the cytoplasm. The catalysed reaction is 3-amino-2-oxopropyl phosphate + 1-deoxy-D-xylulose 5-phosphate = pyridoxine 5'-phosphate + phosphate + 2 H2O + H(+). The protein operates within cofactor biosynthesis; pyridoxine 5'-phosphate biosynthesis; pyridoxine 5'-phosphate from D-erythrose 4-phosphate: step 5/5. Functionally, catalyzes the complicated ring closure reaction between the two acyclic compounds 1-deoxy-D-xylulose-5-phosphate (DXP) and 3-amino-2-oxopropyl phosphate (1-amino-acetone-3-phosphate or AAP) to form pyridoxine 5'-phosphate (PNP) and inorganic phosphate. The polypeptide is Pyridoxine 5'-phosphate synthase (Legionella pneumophila (strain Corby)).